The primary structure comprises 466 residues: Trigger factor (466 aa).

The 82-residue stretch at 162–243 (GDVVSIDLSA…VRSVKERELP (82 aa)) folds into the PPIase FKBP-type domain. The interval 428 to 466 (GNTIDTSEFFGKRVSAGEAEEAEPADEGAARAASDEATT) is disordered. Over residues 457–466 (ARAASDEATT) the composition is skewed to low complexity.

The protein belongs to the FKBP-type PPIase family. Tig subfamily.

The protein resides in the cytoplasm. It carries out the reaction [protein]-peptidylproline (omega=180) = [protein]-peptidylproline (omega=0). Involved in protein export. Acts as a chaperone by maintaining the newly synthesized protein in an open conformation. Functions as a peptidyl-prolyl cis-trans isomerase. The chain is Trigger factor from Mycobacterium tuberculosis (strain ATCC 25177 / H37Ra).